Here is a 559-residue protein sequence, read N- to C-terminus: Sporulation protein kinase mde3 (559 aa).

In terms of domain architecture, Protein kinase spans 21-323 (YLVKQKLGDG…TAKYCKEVFF (303 aa)). Residues 27–35 (LGDGSFGTV) and Lys53 each bind ATP. Asp150 acts as the Proton acceptor in catalysis.

It belongs to the protein kinase superfamily. Ser/Thr protein kinase family.

The enzyme catalyses L-seryl-[protein] + ATP = O-phospho-L-seryl-[protein] + ADP + H(+). The catalysed reaction is L-threonyl-[protein] + ATP = O-phospho-L-threonyl-[protein] + ADP + H(+). Its function is as follows. Protein kinase which is essential for spore formation. This Schizosaccharomyces pombe (strain 972 / ATCC 24843) (Fission yeast) protein is Sporulation protein kinase mde3 (mde3).